The following is a 195-amino-acid chain: Protein GrpE (195 aa).

Residues 1–30 are disordered; the sequence is MSEQEKVEQEEISAELETQNEQEKPMEETE. The span at 10–20 shows a compositional bias: acidic residues; that stretch reads EEISAELETQN.

It belongs to the GrpE family. As to quaternary structure, homodimer.

Its subcellular location is the cytoplasm. Its function is as follows. Participates actively in the response to hyperosmotic and heat shock by preventing the aggregation of stress-denatured proteins, in association with DnaK and GrpE. It is the nucleotide exchange factor for DnaK and may function as a thermosensor. Unfolded proteins bind initially to DnaJ; upon interaction with the DnaJ-bound protein, DnaK hydrolyzes its bound ATP, resulting in the formation of a stable complex. GrpE releases ADP from DnaK; ATP binding to DnaK triggers the release of the substrate protein, thus completing the reaction cycle. Several rounds of ATP-dependent interactions between DnaJ, DnaK and GrpE are required for fully efficient folding. The polypeptide is Protein GrpE (Histophilus somni (strain 2336) (Haemophilus somnus)).